The following is a 683-amino-acid chain: Glycine--tRNA ligase beta subunit (683 aa).

Belongs to the class-II aminoacyl-tRNA synthetase family. As to quaternary structure, tetramer of two alpha and two beta subunits.

Its subcellular location is the cytoplasm. It catalyses the reaction tRNA(Gly) + glycine + ATP = glycyl-tRNA(Gly) + AMP + diphosphate. This Pseudomonas putida (strain GB-1) protein is Glycine--tRNA ligase beta subunit.